The sequence spans 135 residues: Basic phospholipase A2 10 (135 aa).

Intrachain disulfides connect C28-C87, C42-C134, C44-C60, C59-C115, C66-C108, C76-C101, and C94-C106. The Ca(2+) site is built by Y43, G45, and G47. The active site involves H63. D64 lines the Ca(2+) pocket. Residue D109 is part of the active site.

Belongs to the phospholipase A2 family. Group I subfamily. D49 sub-subfamily. It depends on Ca(2+) as a cofactor. Expressed by the venom gland.

It is found in the secreted. The enzyme catalyses a 1,2-diacyl-sn-glycero-3-phosphocholine + H2O = a 1-acyl-sn-glycero-3-phosphocholine + a fatty acid + H(+). Functionally, snake venom phospholipase A2 (PLA2) that inhibits neuromuscular transmission by blocking acetylcholine release from the nerve termini. PLA2 catalyzes the calcium-dependent hydrolysis of the 2-acyl groups in 3-sn-phosphoglycerides. This chain is Basic phospholipase A2 10, found in Bungarus fasciatus (Banded krait).